The following is an 821-amino-acid chain: Ribonuclease R (821 aa).

Positions 267 to 593 (RVDLRALPLV…LLHRAIKYLI (327 aa)) constitute an RNB domain. An S1 motif domain is found at 652–733 (GEELEGVVAN…DDRQIDFELV (82 aa)). Residues 739–821 (LRGQGKTAKK…KSGKVRDKTK (83 aa)) form a disordered region. 2 stretches are compositionally biased toward basic and acidic residues: residues 748–764 (KRADEARAKAQGKKEAA) and 774–794 (TKSELKPQVEATRRPDSEGRS). Positions 795–814 (KPKKTKAPKKRKDQARKKSG) are enriched in basic residues.

The protein belongs to the RNR ribonuclease family. RNase R subfamily.

The protein localises to the cytoplasm. It carries out the reaction Exonucleolytic cleavage in the 3'- to 5'-direction to yield nucleoside 5'-phosphates.. In terms of biological role, 3'-5' exoribonuclease that releases 5'-nucleoside monophosphates and is involved in maturation of structured RNAs. In Vibrio cholerae serotype O1 (strain ATCC 39315 / El Tor Inaba N16961), this protein is Ribonuclease R.